The primary structure comprises 2202 residues: Activating signal cointegrator 1 complex subunit 3 (2202 aa).

The interval Met-1 to Ile-400 is required for interaction with ASCC2. Ser-12 carries the post-translational modification Phosphoserine. Coiled-coil stretches lie at residues Lys-18 to Gln-79 and Ile-328 to Glu-356. Positions Glu-486 to Leu-669 constitute a Helicase ATP-binding 1 domain. Ala-499–Thr-506 contributes to the ATP binding site. N6-acetyllysine is present on Lys-572. Positions Asp-611–His-614 match the DEVH box motif. The 187-residue stretch at Thr-728–Val-914 folds into the Helicase C-terminal 1 domain. In terms of domain architecture, SEC63 1 spans Ser-978–Phe-1287. Positions His-1336 to Phe-1511 constitute a Helicase ATP-binding 2 domain. Ala-1349–Thr-1356 lines the ATP pocket. The DEIH box signature appears at Asp-1453 to His-1456. A Helicase C-terminal 2 domain is found at Pro-1544 to Ile-1739. Residues Pro-1812–Tyr-2176 enclose the SEC63 2 domain. Ser-2195 is subject to Phosphoserine.

The protein belongs to the helicase family. As to quaternary structure, identified in the ASCC complex that contains ASCC1, ASCC2 and ASCC3. Functions as scaffolding subunit that interacts directly with both ASCC1 and ASCC2. Interacts directly with ALKBH3, and thereby recruits ALKBH3 to the ASCC complex. Part of the ASC-1/TRIP4 complex, that contains TRIP4, ASCC1, ASCC2 and ASCC3. Part of the RQT (ribosome quality control trigger) complex, that contains ASCC2, ASCC3 and TRIP4. Associates with ribosomes; recruited to collided ribosomes. Interacts with ZCCHC4. Interacts with ZNF598. Interacts with RPS3. Ubiquitous.

The protein localises to the nucleus. It is found in the nucleus speckle. Its subcellular location is the cytoplasm. The protein resides in the cytosol. It catalyses the reaction Couples ATP hydrolysis with the unwinding of duplex DNA by translocating in the 3'-5' direction.. It carries out the reaction ATP + H2O = ADP + phosphate + H(+). ATPase involved both in DNA repair and rescue of stalled ribosomes. 3'-5' DNA helicase involved in repair of alkylated DNA: promotes DNA unwinding to generate single-stranded substrate needed for ALKBH3, enabling ALKBH3 to process alkylated N3-methylcytosine (3mC) within double-stranded regions. Also involved in activation of the ribosome quality control (RQC) pathway, a pathway that degrades nascent peptide chains during problematic translation. Drives the splitting of stalled ribosomes that are ubiquitinated in a ZNF598-dependent manner, as part of the ribosome quality control trigger (RQT) complex. Part of the ASC-1 complex that enhances NF-kappa-B, SRF and AP1 transactivation. The protein is Activating signal cointegrator 1 complex subunit 3 (ASCC3) of Homo sapiens (Human).